A 276-amino-acid polypeptide reads, in one-letter code: S-adenosylmethionine decarboxylase proenzyme (276 aa).

The Schiff-base intermediate with substrate; via pyruvic acid role is filled by Ser124. Position 124 is a pyruvic acid (Ser); by autocatalysis (Ser124). His129 (proton acceptor; for processing activity) is an active-site residue. The Proton donor; for catalytic activity role is filled by Cys152.

It belongs to the prokaryotic AdoMetDC family. Type 2 subfamily. Heterooctamer of four alpha and four beta chains arranged as a tetramer of alpha/beta heterodimers. Requires pyruvate as cofactor. Is synthesized initially as an inactive proenzyme. Formation of the active enzyme involves a self-maturation process in which the active site pyruvoyl group is generated from an internal serine residue via an autocatalytic post-translational modification. Two non-identical subunits are generated from the proenzyme in this reaction, and the pyruvate is formed at the N-terminus of the alpha chain, which is derived from the carboxyl end of the proenzyme. The post-translation cleavage follows an unusual pathway, termed non-hydrolytic serinolysis, in which the side chain hydroxyl group of the serine supplies its oxygen atom to form the C-terminus of the beta chain, while the remainder of the serine residue undergoes an oxidative deamination to produce ammonia and the pyruvoyl group blocking the N-terminus of the alpha chain.

The catalysed reaction is S-adenosyl-L-methionine + H(+) = S-adenosyl 3-(methylsulfanyl)propylamine + CO2. Its pathway is amine and polyamine biosynthesis; S-adenosylmethioninamine biosynthesis; S-adenosylmethioninamine from S-adenosyl-L-methionine: step 1/1. Catalyzes the decarboxylation of S-adenosylmethionine to S-adenosylmethioninamine (dcAdoMet), the propylamine donor required for the synthesis of the polyamines spermine and spermidine from the diamine putrescine. The chain is S-adenosylmethionine decarboxylase proenzyme from Desulfitobacterium hafniense (strain DSM 10664 / DCB-2).